A 367-amino-acid chain; its full sequence is MSANSFGKLFTVTTFGESHGPAIGCVVDGCPPGLEIAPEEFTHDLQRRASGKSRHTSARREADEIEILSGVYEGRTTGTPIGLLIRNTDQRSKDYSNIAQQFRPGHADYTYWQKYGIRDPRGGGRSSARETTMRVAAGVIAKKWLKQRYGVLVRGFLSQLGEIRPAGFDWDAVEDNPFFWPHAAQVPELETYMDALRKSGDSVGARVDVVAGGVPAGWGEPIYGKLDAELAAALMSINAVKGVEIGDGFASAAQRGTEHRDLITPEGFLSNHAGGILGGISTGQAVTASMVLKPTSSLRLPGATVDADGSVVDVITTGRHDPCVGIRATPIAEAMMALVLMDQALRHRAQCGDVGEVSPRIPGQVDV.

Residues 41-60 (FTHDLQRRASGKSRHTSARR) are disordered. NADP(+)-binding residues include Arg-48 and Arg-54. FMN is bound by residues 125 to 127 (RSS), 238 to 239 (NA), Gly-278, 293 to 297 (KPTSS), and Arg-319.

Belongs to the chorismate synthase family. Homotetramer. Requires FMNH2 as cofactor.

It carries out the reaction 5-O-(1-carboxyvinyl)-3-phosphoshikimate = chorismate + phosphate. Its pathway is metabolic intermediate biosynthesis; chorismate biosynthesis; chorismate from D-erythrose 4-phosphate and phosphoenolpyruvate: step 7/7. In terms of biological role, catalyzes the anti-1,4-elimination of the C-3 phosphate and the C-6 proR hydrogen from 5-enolpyruvylshikimate-3-phosphate (EPSP) to yield chorismate, which is the branch point compound that serves as the starting substrate for the three terminal pathways of aromatic amino acid biosynthesis. This reaction introduces a second double bond into the aromatic ring system. The sequence is that of Chorismate synthase from Xanthomonas axonopodis pv. citri (strain 306).